The sequence spans 366 residues: Rab9 effector protein with kelch motifs (366 aa).

Kelch repeat units follow at residues Lys-49–Ala-95, Asn-100–Ala-146, Lys-151–Ala-200, Lys-204–Ser-253, Tyr-254–Trp-303, and Leu-343–Gln-366.

In terms of biological role, rab9 effector required for endosome to trans-Golgi network (TGN) transport. The chain is Rab9 effector protein with kelch motifs (rabepk) from Xenopus laevis (African clawed frog).